The following is a 139-amino-acid chain: D-ribose pyranase (139 aa).

Residue histidine 20 is the Proton donor of the active site. Residues aspartate 28, histidine 106, and 128–130 contribute to the substrate site; that span reads YAN.

This sequence belongs to the RbsD / FucU family. RbsD subfamily. Homodecamer.

The protein localises to the cytoplasm. It carries out the reaction beta-D-ribopyranose = beta-D-ribofuranose. Its pathway is carbohydrate metabolism; D-ribose degradation; D-ribose 5-phosphate from beta-D-ribopyranose: step 1/2. Its function is as follows. Catalyzes the interconversion of beta-pyran and beta-furan forms of D-ribose. The chain is D-ribose pyranase from Vibrio parahaemolyticus serotype O3:K6 (strain RIMD 2210633).